Consider the following 152-residue polypeptide: FMN reductase (NADH) RutF (152 aa).

This sequence belongs to the non-flavoprotein flavin reductase family. RutF subfamily.

It catalyses the reaction FMNH2 + NAD(+) = FMN + NADH + 2 H(+). Its function is as follows. Catalyzes the reduction of FMN to FMNH2 which is used to reduce pyrimidine by RutA via the Rut pathway. This is FMN reductase (NADH) RutF from Shigella flexneri.